The primary structure comprises 116 residues: Fluoride-specific ion channel FluC 1 (116 aa).

A run of 4 helical transmembrane segments spans residues 1 to 21, 31 to 51, 58 to 78, and 92 to 112; these read MGKL…RYTV, IPAG…FLTF, MVYL…TFAY, and FFLN…IAYL. Glycine 68 and threonine 71 together coordinate Na(+).

The protein belongs to the fluoride channel Fluc/FEX (TC 1.A.43) family.

Its subcellular location is the cell membrane. It catalyses the reaction fluoride(in) = fluoride(out). Na(+) is not transported, but it plays an essential structural role and its presence is essential for fluoride channel function. In terms of biological role, fluoride-specific ion channel. Important for reducing fluoride concentration in the cell, thus reducing its toxicity. In Methanosarcina barkeri (strain Fusaro / DSM 804), this protein is Fluoride-specific ion channel FluC 1.